Consider the following 326-residue polypeptide: Probable cell division protein WhiA (326 aa).

A DNA-binding region (H-T-H motif) is located at residues 275 to 308; that stretch reads SLEELGQLAEPPMTKDAVAGRIRRLLAMADKRAR.

The protein belongs to the WhiA family.

Functionally, involved in cell division and chromosome segregation. This chain is Probable cell division protein WhiA, found in Saccharopolyspora erythraea (strain ATCC 11635 / DSM 40517 / JCM 4748 / NBRC 13426 / NCIMB 8594 / NRRL 2338).